The chain runs to 188 residues: dCTP deaminase (188 aa).

DCTP is bound by residues 111–116, 135–137, glutamine 156, tyrosine 170, and glutamine 180; these read KSTYAR and TLE. The Proton donor/acceptor role is filled by glutamate 137.

Belongs to the dCTP deaminase family. In terms of assembly, homotrimer.

It carries out the reaction dCTP + H2O + H(+) = dUTP + NH4(+). It participates in pyrimidine metabolism; dUMP biosynthesis; dUMP from dCTP (dUTP route): step 1/2. Its function is as follows. Catalyzes the deamination of dCTP to dUTP. This is dCTP deaminase from Methylococcus capsulatus (strain ATCC 33009 / NCIMB 11132 / Bath).